We begin with the raw amino-acid sequence, 262 residues long: Putative BTB/POZ domain-containing protein L834 (262 aa).

The BTB domain occupies 16-86 (FDVVVELTDE…FYKKNIQPCI (71 aa)).

It belongs to the mimivirus BTB/WD family.

The polypeptide is Putative BTB/POZ domain-containing protein L834 (Acanthamoeba polyphaga (Amoeba)).